A 357-amino-acid polypeptide reads, in one-letter code: Beta-hexosaminidase (357 aa).

Substrate-binding positions include Asp72, Arg80, Arg146, and 176–177 (KH). Residue His189 is the Proton donor/acceptor of the active site. The Nucleophile role is filled by Asp260.

Belongs to the glycosyl hydrolase 3 family. NagZ subfamily.

The protein resides in the cytoplasm. It carries out the reaction Hydrolysis of terminal non-reducing N-acetyl-D-hexosamine residues in N-acetyl-beta-D-hexosaminides.. It participates in cell wall biogenesis; peptidoglycan recycling. In terms of biological role, plays a role in peptidoglycan recycling by cleaving the terminal beta-1,4-linked N-acetylglucosamine (GlcNAc) from peptide-linked peptidoglycan fragments, giving rise to free GlcNAc, anhydro-N-acetylmuramic acid and anhydro-N-acetylmuramic acid-linked peptides. This is Beta-hexosaminidase from Hydrogenovibrio crunogenus (strain DSM 25203 / XCL-2) (Thiomicrospira crunogena).